The following is a 270-amino-acid chain: 5'-AMP-activated protein kinase subunit beta-1 (270 aa).

Residues 1-44 (MGNTSSERAALDRQGGHKTPRRDSSGGSKDGDRPKILMDSPEDA) form a disordered region. A lipid anchor (N-myristoyl glycine) is attached at glycine 2. Residue threonine 4 is modified to Phosphothreonine. 2 positions are modified to phosphoserine: serine 5 and serine 6. Residues 9-36 (AALDRQGGHKTPRRDSSGGSKDGDRPKI) are compositionally biased toward basic and acidic residues. Phosphothreonine is present on threonine 19. 2 positions are modified to phosphoserine; by autocatalysis: serine 24 and serine 25. Residues serine 40, serine 96, and serine 101 each carry the phosphoserine modification. The interval 68–163 (EVNDKAPAQA…QVKKTDFEVF (96 aa)) is glycogen-binding domain. A Phosphoserine; by autocatalysis modification is found at serine 108. Residue threonine 148 is modified to Phosphothreonine. Serine 182 is modified (phosphoserine). An N6-succinyllysine modification is found at lysine 201.

Belongs to the 5'-AMP-activated protein kinase beta subunit family. In terms of assembly, AMPK is a heterotrimer of an alpha catalytic subunit (PRKAA1 or PRKAA2), a beta (PRKAB1 or PRKAB2) and a gamma non-catalytic subunits (PRKAG1, PRKAG2 or PRKAG3). Interacts with FNIP1 and FNIP2. In terms of processing, phosphorylated when associated with the catalytic subunit (PRKAA1 or PRKAA2). Phosphorylated by ULK1; leading to negatively regulate AMPK activity and suggesting the existence of a regulatory feedback loop between ULK1 and AMPK.

In terms of biological role, non-catalytic subunit of AMP-activated protein kinase (AMPK), an energy sensor protein kinase that plays a key role in regulating cellular energy metabolism. In response to reduction of intracellular ATP levels, AMPK activates energy-producing pathways and inhibits energy-consuming processes: inhibits protein, carbohydrate and lipid biosynthesis, as well as cell growth and proliferation. AMPK acts via direct phosphorylation of metabolic enzymes, and by longer-term effects via phosphorylation of transcription regulators. Also acts as a regulator of cellular polarity by remodeling the actin cytoskeleton; probably by indirectly activating myosin. Beta non-catalytic subunit acts as a scaffold on which the AMPK complex assembles, via its C-terminus that bridges alpha (PRKAA1 or PRKAA2) and gamma subunits (PRKAG1, PRKAG2 or PRKAG3). The polypeptide is 5'-AMP-activated protein kinase subunit beta-1 (PRKAB1) (Bos taurus (Bovine)).